A 203-amino-acid polypeptide reads, in one-letter code: uncharacterized protein (203 aa).

A run of 3 helical transmembrane segments spans residues 60–80, 114–134, and 157–177; these read IIDM…FFLY, WFQL…YFCT, and LQLG…ALIL. Residue 192 to 199 coordinates ATP; that stretch reads GAMSEGKT.

The protein resides in the membrane. This is an uncharacterized protein from Saccharomyces cerevisiae (strain ATCC 204508 / S288c) (Baker's yeast).